Reading from the N-terminus, the 475-residue chain is Aspartyl/glutamyl-tRNA(Asn/Gln) amidotransferase subunit B (475 aa).

It belongs to the GatB/GatE family. GatB subfamily. Heterotrimer of A, B and C subunits.

The enzyme catalyses L-glutamyl-tRNA(Gln) + L-glutamine + ATP + H2O = L-glutaminyl-tRNA(Gln) + L-glutamate + ADP + phosphate + H(+). The catalysed reaction is L-aspartyl-tRNA(Asn) + L-glutamine + ATP + H2O = L-asparaginyl-tRNA(Asn) + L-glutamate + ADP + phosphate + 2 H(+). Functionally, allows the formation of correctly charged Asn-tRNA(Asn) or Gln-tRNA(Gln) through the transamidation of misacylated Asp-tRNA(Asn) or Glu-tRNA(Gln) in organisms which lack either or both of asparaginyl-tRNA or glutaminyl-tRNA synthetases. The reaction takes place in the presence of glutamine and ATP through an activated phospho-Asp-tRNA(Asn) or phospho-Glu-tRNA(Gln). This chain is Aspartyl/glutamyl-tRNA(Asn/Gln) amidotransferase subunit B, found in Lysinibacillus sphaericus (strain C3-41).